Reading from the N-terminus, the 554-residue chain is CTP synthase (554 aa).

The interval 1–265 (MTPLIFVTGG…DELVIDQFKL (265 aa)) is amidoligase domain. S13 is a CTP binding site. S13 serves as a coordination point for UTP. Residues 14–19 (SLGKGI) and D71 contribute to the ATP site. The Mg(2+) site is built by D71 and E139. CTP-binding positions include 146–148 (DIE), 186–191 (KTKPTQ), and K222. UTP contacts are provided by residues 186 to 191 (KTKPTQ) and K222. In terms of domain architecture, Glutamine amidotransferase type-1 spans 292 to 545 (NIAVVGKYVD…VRAAREKKAG (254 aa)). G353 provides a ligand contact to L-glutamine. The active-site Nucleophile; for glutamine hydrolysis is C380. L-glutamine is bound by residues 381-384 (YGMQ), E404, and R471. Active-site residues include H518 and E520.

The protein belongs to the CTP synthase family. Homotetramer.

The enzyme catalyses UTP + L-glutamine + ATP + H2O = CTP + L-glutamate + ADP + phosphate + 2 H(+). It catalyses the reaction L-glutamine + H2O = L-glutamate + NH4(+). The catalysed reaction is UTP + NH4(+) + ATP = CTP + ADP + phosphate + 2 H(+). The protein operates within pyrimidine metabolism; CTP biosynthesis via de novo pathway; CTP from UDP: step 2/2. Its activity is regulated as follows. Allosterically activated by GTP, when glutamine is the substrate; GTP has no effect on the reaction when ammonia is the substrate. The allosteric effector GTP functions by stabilizing the protein conformation that binds the tetrahedral intermediate(s) formed during glutamine hydrolysis. Inhibited by the product CTP, via allosteric rather than competitive inhibition. Its function is as follows. Catalyzes the ATP-dependent amination of UTP to CTP with either L-glutamine or ammonia as the source of nitrogen. Regulates intracellular CTP levels through interactions with the four ribonucleotide triphosphates. The sequence is that of CTP synthase from Xanthomonas axonopodis pv. citri (strain 306).